Reading from the N-terminus, the 74-residue chain is DNA gyrase inhibitor YacG (74 aa).

Zn(2+) is bound by residues C7, C10, C26, and C30.

This sequence belongs to the DNA gyrase inhibitor YacG family. Interacts with GyrB. Zn(2+) serves as cofactor.

Functionally, inhibits all the catalytic activities of DNA gyrase by preventing its interaction with DNA. Acts by binding directly to the C-terminal domain of GyrB, which probably disrupts DNA binding by the gyrase. The sequence is that of DNA gyrase inhibitor YacG from Shewanella denitrificans (strain OS217 / ATCC BAA-1090 / DSM 15013).